Consider the following 212-residue polypeptide: Golgi-associated RAB2 interactor protein 5A (212 aa).

Disordered regions lie at residues 1 to 21 (MKGG…LAPA) and 162 to 212 (PFTH…LWGL). Acidic residues predominate over residues 169 to 185 (APEEEEEEEEEEEEEEV).

Belongs to the GARIN family. As to quaternary structure, interacts (via N-terminus) with RAB2B (in GTP-bound form). In terms of tissue distribution, expressed in testis (at protein level).

It is found in the golgi apparatus. RAB2B effector protein which promotes cytosolic DNA-induced innate immune responses. Regulates IFN responses against DNA viruses by regulating the CGAS-STING signaling axis. The sequence is that of Golgi-associated RAB2 interactor protein 5A from Mus musculus (Mouse).